A 118-amino-acid chain; its full sequence is Large ribosomal subunit protein bL20 (118 aa).

It belongs to the bacterial ribosomal protein bL20 family.

Functionally, binds directly to 23S ribosomal RNA and is necessary for the in vitro assembly process of the 50S ribosomal subunit. It is not involved in the protein synthesizing functions of that subunit. The polypeptide is Large ribosomal subunit protein bL20 (Pseudomonas fluorescens (strain SBW25)).